The chain runs to 768 residues: WD repeat-containing protein 20 homolog (768 aa).

Positions 103-122 are disordered; that stretch reads ESPEAVAPTSSTYEHHKNEP. 4 WD repeats span residues 224–264, 302–342, 345–384, and 454–497; these read IEKT…ASSN, IGEG…LLAV, SYFG…VVCR, and CSLA…LNQG. The interval 531-608 is disordered; the sequence is VSPGGAGVNA…VNSESSKKQN (78 aa). Over residues 539–553 the composition is skewed to polar residues; that stretch reads NASSDSQSITNNHTT. Residues 570 to 582 are compositionally biased toward low complexity; the sequence is FSKFTSGSSSATS. Over residues 595-608 the composition is skewed to polar residues; it reads NGASVNSESSKKQN. A WD 5 repeat occupies 646 to 683; it reads VSHDRLTVLEFREDCVVTACQEGYICTWGRPGRYQPKR. Residues 684–749 are disordered; the sequence is DCINSPGTAS…PNITSPSYRV (66 aa). A compositionally biased stretch (polar residues) spans 688-712; it reads SPGTASPESGQKPSGSTSAMTSSYG. Over residues 724–733 the composition is skewed to low complexity; the sequence is SRSSSTYSNS. Over residues 734–749 the composition is skewed to polar residues; the sequence is EQQLRSPNITSPSYRV.

In terms of assembly, interacts with usp-46; the interaction increases the catalytic activity of usp-46 in the presence of wdr-48. In terms of tissue distribution, expressed in several neurons in the head and tail.

In terms of biological role, together with wdr-48, binds to and stimulates the activity of the deubiquitinating enzyme usp-46, leading to deubiquitination and stabilization of the glr-1 glutamate receptor. This Caenorhabditis elegans protein is WD repeat-containing protein 20 homolog.